Here is a 242-residue protein sequence, read N- to C-terminus: uncharacterized protein (242 aa).

Residues 57–67 (SPTSQKTSASG) are compositionally biased toward polar residues. The interval 57–78 (SPTSQKTSASGQEEPDPLHDKS) is disordered. Positions 76–188 (DKSSGLIQRF…GYMSTPPPVK (113 aa)) constitute a DUF1279 domain. Residues 92–114 (YGKVMIPVHLLTSTMWFGTFYYA) form a helical membrane-spanning segment. Residues 188 to 237 (KEYLQEKMEETKERISGKMEETKDRFSERMEETKDKFNEKLQETKDKVSF) are a coiled coil. Residues 198-236 (TKERISGKMEETKDRFSERMEETKDKFNEKLQETKDKVS) show a composition bias toward basic and acidic residues. The tract at residues 198 to 242 (TKERISGKMEETKDRFSERMEETKDKFNEKLQETKDKVSFRKKKE) is disordered.

The protein resides in the membrane. This is an uncharacterized protein from Danio rerio (Zebrafish).